The primary structure comprises 738 residues: Polyribonucleotide nucleotidyltransferase (738 aa).

The Mg(2+) site is built by D528 and D534. A KH domain is found at P594–V653. One can recognise an S1 motif domain in the interval G665–V737.

This sequence belongs to the polyribonucleotide nucleotidyltransferase family. The cofactor is Mg(2+).

It is found in the cytoplasm. It catalyses the reaction RNA(n+1) + phosphate = RNA(n) + a ribonucleoside 5'-diphosphate. In terms of biological role, involved in mRNA degradation. Catalyzes the phosphorolysis of single-stranded polyribonucleotides processively in the 3'- to 5'-direction. In Tropheryma whipplei (strain Twist) (Whipple's bacillus), this protein is Polyribonucleotide nucleotidyltransferase.